The chain runs to 195 residues: Elongation factor Ts (195 aa).

The segment at 81–84 is involved in Mg(2+) ion dislocation from EF-Tu; the sequence is TDFV.

It belongs to the EF-Ts family.

It localises to the cytoplasm. Its function is as follows. Associates with the EF-Tu.GDP complex and induces the exchange of GDP to GTP. It remains bound to the aminoacyl-tRNA.EF-Tu.GTP complex up to the GTP hydrolysis stage on the ribosome. This chain is Elongation factor Ts, found in Rubrobacter xylanophilus (strain DSM 9941 / JCM 11954 / NBRC 16129 / PRD-1).